The chain runs to 467 residues: MTSNPPDLRPDLAPKPTFGTAPRPDQPTLGMVSLGCPKALVDSERILTRLRAEGYGISADYAGADAVIVNTCGFLDSAKAESLEAIGEALKENGKVIVTGCLGAEPDYIREHHPRILAVTGPHQYEQVLDAVHAAVPPSPDPFVDLLPATGVSLTPRHFSYLKISEGCNHKCKFCIIPDMRGKLASRPAHAVLREAEKLVTAGVRELLVISQDTSAYGLDRKYDVNPWKDGEVRSHITDLSRALGELAPADQLWVRLHYVYPYPHVRELIPLMADPENAVLPYLDIPFQHAHPDVLRRMARPAAAAKTLDEIRAWRAICPDITLRSTFIVGYPGETEAEFQHLLDWMDEAQLDRVGCFKYENVDGARSNDLPDHVAEEVKQNRWERFMEKAQAISEAKLASKVGQTLQVIVDEIDEDGIATCRTKADAPEIDGNLFIDEGTANLSVGDLVTVEVDEAGEYDLWGALR.

The tract at residues 1-27 (MTSNPPDLRPDLAPKPTFGTAPRPDQP) is disordered. In terms of domain architecture, MTTase N-terminal spans 27–137 (PTLGMVSLGC…VLDAVHAAVP (111 aa)). 6 residues coordinate [4Fe-4S] cluster: Cys36, Cys72, Cys101, Cys168, Cys172, and Cys175. Residues 154-397 (LTPRHFSYLK…MEKAQAISEA (244 aa)) form the Radical SAM core domain. The TRAM domain occupies 400-467 (ASKVGQTLQV…GEYDLWGALR (68 aa)).

The protein belongs to the methylthiotransferase family. RimO subfamily. Requires [4Fe-4S] cluster as cofactor.

It localises to the cytoplasm. It carries out the reaction L-aspartate(89)-[ribosomal protein uS12]-hydrogen + (sulfur carrier)-SH + AH2 + 2 S-adenosyl-L-methionine = 3-methylsulfanyl-L-aspartate(89)-[ribosomal protein uS12]-hydrogen + (sulfur carrier)-H + 5'-deoxyadenosine + L-methionine + A + S-adenosyl-L-homocysteine + 2 H(+). Functionally, catalyzes the methylthiolation of an aspartic acid residue of ribosomal protein uS12. This Ruegeria sp. (strain TM1040) (Silicibacter sp.) protein is Ribosomal protein uS12 methylthiotransferase RimO.